The following is a 394-amino-acid chain: Elongation factor Tu 1 (394 aa).

The region spanning 10–204 is the tr-type G domain; the sequence is KPHVNVGTIG…ALDSYIPEPE (195 aa). Residues 19–26 form a G1 region; the sequence is GHVDHGKT. 19–26 contributes to the GTP binding site; sequence GHVDHGKT. Thr-26 serves as a coordination point for Mg(2+). Positions 60 to 64 are G2; that stretch reads GITIS. The G3 stretch occupies residues 81–84; sequence DCPG. GTP-binding positions include 81-85 and 136-139; these read DCPGH and NKCD. The interval 136 to 139 is G4; it reads NKCD. Residues 174 to 176 are G5; that stretch reads SAL.

It belongs to the TRAFAC class translation factor GTPase superfamily. Classic translation factor GTPase family. EF-Tu/EF-1A subfamily. As to quaternary structure, monomer.

The protein resides in the cytoplasm. It catalyses the reaction GTP + H2O = GDP + phosphate + H(+). Its function is as follows. GTP hydrolase that promotes the GTP-dependent binding of aminoacyl-tRNA to the A-site of ribosomes during protein biosynthesis. In Vibrio vulnificus (strain YJ016), this protein is Elongation factor Tu 1.